The primary structure comprises 488 residues: Ribulose bisphosphate carboxylase large chain (488 aa).

N127 and T177 together coordinate substrate. The active-site Proton acceptor is the K179. K181 serves as a coordination point for substrate. Mg(2+) is bound by residues K205, D207, and E208. The residue at position 205 (K205) is an N6-carboxylysine. Catalysis depends on H297, which acts as the Proton acceptor. Substrate-binding residues include R298, H330, and S382.

Belongs to the RuBisCO large chain family. Type I subfamily. In terms of assembly, heterohexadecamer of 8 large chains and 8 small chains. The cofactor is Mg(2+).

The protein localises to the plastid. It localises to the chloroplast. It catalyses the reaction 2 (2R)-3-phosphoglycerate + 2 H(+) = D-ribulose 1,5-bisphosphate + CO2 + H2O. The catalysed reaction is D-ribulose 1,5-bisphosphate + O2 = 2-phosphoglycolate + (2R)-3-phosphoglycerate + 2 H(+). Functionally, ruBisCO catalyzes two reactions: the carboxylation of D-ribulose 1,5-bisphosphate, the primary event in carbon dioxide fixation, as well as the oxidative fragmentation of the pentose substrate in the photorespiration process. Both reactions occur simultaneously and in competition at the same active site. The protein is Ribulose bisphosphate carboxylase large chain of Pyropia suborbiculata (Red alga).